The chain runs to 363 residues: Protein disulfide-isomerase 1 (363 aa).

The signal sequence occupies residues 1 to 20; that stretch reads MKILLFVTLIALAFVALCSA. 2 Thioredoxin domains span residues 21–132 and 133–285; these read EGNV…NHAK and TNVK…AAAE. Active-site nucleophile residues include C51, C54, C172, and C175. Disulfide bonds link C51/C54 and C172/C175.

The protein belongs to the protein disulfide isomerase family.

The protein localises to the endoplasmic reticulum lumen. It carries out the reaction Catalyzes the rearrangement of -S-S- bonds in proteins.. Its function is as follows. Participates in the folding of proteins containing disulfide bonds, may be involved in glycosylation, prolyl hydroxylation and triglyceride transfer. The chain is Protein disulfide-isomerase 1 (pdi1) from Dictyostelium discoideum (Social amoeba).